Reading from the N-terminus, the 93-residue chain is C-C motif chemokine 14 (93 aa).

The first 19 residues, 1–19 (MKISVAAIPFFLLITIALG), serve as a signal peptide directing secretion. Ser26 carries O-linked (GalNAc...) serine; partial glycosylation. 2 disulfides stabilise this stretch: Cys35–Cys59 and Cys36–Cys75.

Belongs to the intercrine beta (chemokine CC) family. The N-terminal processed forms HCC-1(3-74), HCC-1(4-74) and HCC-1(9-74) are produced in small amounts by proteolytic cleavage after secretion in blood. In terms of processing, HCC-1(1-74), but not HCC-1(3-74) and HCC-1(4-74), is partially O-glycosylated; the O-linked glycan consists of one Gal-GalNAc disaccharide, further modified by two N-acetylneuraminic acids. As to expression, expressed constitutively in several normal tissues: spleen, liver, skeletal and heart muscle, gut, and bone marrow, present at high concentrations (1-80 nM) in plasma.

Its subcellular location is the secreted. Functionally, has weak activities on human monocytes and acts via receptors that also recognize MIP-1 alpha. It induces intracellular Ca(2+) changes and enzyme release, but no chemotaxis, at concentrations of 100-1,000 nM, and is inactive on T-lymphocytes, neutrophils, and eosinophil leukocytes. Enhances the proliferation of CD34 myeloid progenitor cells. The processed form HCC-1(9-74) is a chemotactic factor that attracts monocytes, eosinophils, and T-cells and is a ligand for CCR1, CCR3 and CCR5. This chain is C-C motif chemokine 14 (CCL14), found in Homo sapiens (Human).